The sequence spans 297 residues: Formylmethanofuran--tetrahydromethanopterin formyltransferase (297 aa).

This sequence belongs to the FTR family. In terms of assembly, homotetramer.

The protein resides in the cytoplasm. The catalysed reaction is N-formylmethanofuran + 5,6,7,8-tetrahydromethanopterin + H(+) = N(5)-formyl-5,6,7,8-tetrahydromethanopterin + methanofuran. The protein operates within one-carbon metabolism; methanogenesis from CO(2); 5,10-methenyl-5,6,7,8-tetrahydromethanopterin from CO(2): step 2/3. In terms of biological role, catalyzes the reversible transfer of a formyl group from formylmethanofuran (formyl-MFR) to tetrahydromethanopterin (H(4)MPT) to produce 5-formyl tetrahydromethanopterin (5-formyl-H(4)MPT) and methanofuran (MFR). This chain is Formylmethanofuran--tetrahydromethanopterin formyltransferase, found in Methanosarcina acetivorans (strain ATCC 35395 / DSM 2834 / JCM 12185 / C2A).